The following is a 146-amino-acid chain: Anti-sigma F factor (146 aa).

It belongs to the anti-sigma-factor family.

The enzyme catalyses L-seryl-[protein] + ATP = O-phospho-L-seryl-[protein] + ADP + H(+). It carries out the reaction L-threonyl-[protein] + ATP = O-phospho-L-threonyl-[protein] + ADP + H(+). Its function is as follows. Binds to sigma F and blocks its ability to form an RNA polymerase holoenzyme (E-sigma F). Phosphorylates SpoIIAA on a serine residue. This phosphorylation may enable SpoIIAA to act as an anti-anti-sigma factor that counteracts SpoIIAB and thus releases sigma F from inhibition. This Anoxybacillus flavithermus (strain DSM 21510 / WK1) protein is Anti-sigma F factor.